The primary structure comprises 448 residues: SET domain-containing protein SmydA-8, isoform B (448 aa).

Residues proline 42–alanine 273 enclose the SET domain.

It belongs to the class V-like SAM-binding methyltransferase superfamily.

This is SET domain-containing protein SmydA-8, isoform B from Drosophila melanogaster (Fruit fly).